We begin with the raw amino-acid sequence, 822 residues long: Pentatricopeptide repeat-containing protein At2g18940, chloroplastic (822 aa).

Residues 1 to 42 (MDGALFPHKPPYPIQSKRPPPSQSSNQSIKFSSATLHLPPPS) form a disordered region. Residues 1-77 (MDGALFPHKP…SAAARFPSLE (77 aa)) constitute a chloroplast transit peptide. Positions 8 to 22 (HKPPYPIQSKRPPPS) are enriched in pro residues. The span at 23-37 (QSSNQSIKFSSATLH) shows a compositional bias: low complexity. PPR repeat units follow at residues 209–243 (DVRAYTTILHAYSRTGKYEKAIDLFERMKEMGPSP), 244–279 (TLVTYNVILDVFGKMGRSWRKILGVLDEMRSKGLKF), 280–314 (DEFTCSTVLSACAREGLLREAKEFFAELKSCGYEP), 315–349 (GTVTYNALLQVFGKAGVYTEALSVLKEMEENSCPA), 350–384 (DSVTYNELVAAYVRAGFSKEAAGVIEMMTKKGVMP), 385–419 (NAITYTTVIDAYGKAGKEDEALKLFYSMKEAGCVP), 420–454 (NTCTYNAVLSLLGKKSRSNEMIKMLCDMKSNGCSP), 455–489 (NRATWNTMLALCGNKGMDKFVNRVFREMKSCGFEP), 490–524 (DRDTFNTLISAYGRCGSEVDASKMYGEMTRAGFNA), 525–559 (CVTTYNALLNALARKGDWRSGENVISDMKSKGFKP), 560–594 (TETSYSLMLQCYAKGGNYLGIERIENRIKEGQIFP), 595–629 (SWMLLRTLLLANFKCRALAGSERAFTLFKKHGYKP), 630–664 (DMVIFNSMLSIFTRNNMYDQAEGILESIREDGLSP), 665–699 (DLVTYNSLMDMYVRRGECWKAEEILKTLEKSQLKP), 700–734 (DLVSYNTVIKGFCRRGLMQEAVRMLSEMTERGIRP), 735–769 (CIFTYNTFVSGYTAMGMFAEIEDVIECMAKNDCRP), and 770–800 (NELTFKMVVDGYCRAGKYSEAMDFVSKIKTF).

It belongs to the PPR family. P subfamily.

The protein localises to the plastid. It localises to the chloroplast. The protein is Pentatricopeptide repeat-containing protein At2g18940, chloroplastic of Arabidopsis thaliana (Mouse-ear cress).